A 352-amino-acid polypeptide reads, in one-letter code: Protein RecA (352 aa).

67–74 (GPESSGKT) contacts ATP.

It belongs to the RecA family.

The protein localises to the cytoplasm. In terms of biological role, can catalyze the hydrolysis of ATP in the presence of single-stranded DNA, the ATP-dependent uptake of single-stranded DNA by duplex DNA, and the ATP-dependent hybridization of homologous single-stranded DNAs. It interacts with LexA causing its activation and leading to its autocatalytic cleavage. The polypeptide is Protein RecA (Klebsiella pneumoniae subsp. pneumoniae (strain ATCC 700721 / MGH 78578)).